Consider the following 855-residue polypeptide: Zinc finger protein 814 (855 aa).

The KRAB domain occupies 15–91; sequence VTFEDVAVNF…PMAGVSPKKA (77 aa). A C2H2-type 1; degenerate zinc finger spans residues 120–142; sequence HRCEAWGNKLYDSGNFHQHQNEH. 22 consecutive C2H2-type zinc fingers follow at residues 242–264, 269–291, 296–318, 324–346, 352–374, 380–402, 408–430, 436–458, 464–486, 492–514, 520–542, 548–570, 576–598, 604–626, 632–654, 660–682, 688–710, 716–738, 744–766, 772–794, 800–822, and 828–850; these read YVCCECGKSFSKYASLSNHQRVH, HECGECGKSFSKYVSFSNHQRVH, YECGECGKSFSKYASFSNHQRVH, YECGECGKSFSKYVSFSNHQRVH, YECGECGKSFSQKSSLIQHQRFH, YGCEECGKSFSSEGHLRSHQRVH, FKCGECVKSFSHKRSLVHHQRVH, YQCGECGKSFSQKGNLVLHQRVH, YECGECGKSFSSKGHLRNHQQIH, YECGECGKSFSHKGTLILHQRVH, YGCGECGKSFSSIGHLRSHQRVH, YECGECGKSFSHKRSLVHHQRMH, YKCGDCGKSFNEKGHLRNHQRVH, FKCGECGKCFSHKGNLILHQHGH, YVCRECGKLFKKKSHLLVHQRIH, YACEACQKFFRNKYQLIAHQRVH, YECNDCGKSFTHSSTFCVHKRIH, YECSECGKSFAESSSFTKHKRVH, YECSECGKSFAESSSLTKHKRVH, and YKCEKCGKLFNKKSHLLVHQSSH. K335 participates in a covalent cross-link: Glycyl lysine isopeptide (Lys-Gly) (interchain with G-Cter in SUMO2). Residue K391 forms a Glycyl lysine isopeptide (Lys-Gly) (interchain with G-Cter in SUMO2) linkage.

This is Zinc finger protein 814 (ZNF814) from Homo sapiens (Human).